We begin with the raw amino-acid sequence, 346 residues long: Hydroxyproline O-galactosyltransferase HPGT3 (346 aa).

Residues 1–10 are compositionally biased toward polar residues; sequence MESLPTTVPS. The disordered stretch occupies residues 1-21; that stretch reads MESLPTTVPSKSERRARSSKF. The Cytoplasmic portion of the chain corresponds to 1 to 28; the sequence is MESLPTTVPSKSERRARSSKFSQSSSKP. The chain crosses the membrane as a helical; Signal-anchor for type II membrane protein span at residues 29–45; the sequence is SVIMAFFSCVAWLYVAG. At 46–346 the chain is on the lumenal side; it reads RLWQDAENRV…IRQDKVCSVA (301 aa).

The protein belongs to the glycosyltransferase 31 family. It depends on Mn(2+) as a cofactor. As to expression, expressed in roots, rosette leaves, cauline leaves, stems, flowers and siliques.

It is found in the golgi apparatus membrane. It functions in the pathway protein modification; protein glycosylation. Its function is as follows. Possesses hydroxyproline O-galactosyltransferase activity. Transfers galactose from UDP-galactose to hydroxyproline residues in the arabinogalactan proteins (AGPs). Is specific for AGPs containing non-contiguous peptidyl hydroxyproline residues. The addition of galactose onto the peptidyl hydroxyproline residues in AGP core proteins represents the first committed step in arabinogalactan polysaccharide addition. AGP glycans play essential roles in both vegetative and reproductive plant growth. This Arabidopsis thaliana (Mouse-ear cress) protein is Hydroxyproline O-galactosyltransferase HPGT3.